Here is a 319-residue protein sequence, read N- to C-terminus: Ribonuclease Z (319 aa).

Residues His62, His64, Asp66, His67, His145, Asp215, and His273 each coordinate Zn(2+). The active-site Proton acceptor is the Asp66.

The protein belongs to the RNase Z family. As to quaternary structure, homodimer. Zn(2+) is required as a cofactor.

It catalyses the reaction Endonucleolytic cleavage of RNA, removing extra 3' nucleotides from tRNA precursor, generating 3' termini of tRNAs. A 3'-hydroxy group is left at the tRNA terminus and a 5'-phosphoryl group is left at the trailer molecule.. Its function is as follows. Zinc phosphodiesterase, which displays some tRNA 3'-processing endonuclease activity. Probably involved in tRNA maturation, by removing a 3'-trailer from precursor tRNA. This Borreliella burgdorferi (strain ATCC 35210 / DSM 4680 / CIP 102532 / B31) (Borrelia burgdorferi) protein is Ribonuclease Z.